We begin with the raw amino-acid sequence, 463 residues long: MLPSQSPAIFTVSRLNQTVRLLLEREMGQVWISGEISNFSQPSSGHWYFTLKDDNAQVRCAMFRNSNRRVTFRPQHGQQVLVRANITLYEPRGDYQIIVESMQPAGEGLLQQKYEQLKAQLTAEGLFEQKHKQALPSPAHCVGVITSKTGAALHDILHVLRRRDPGLPVIIYPTAVQGDDAPGQIVRAIALANARQECDVLIVGRGGGSLEDLWSFNDERVARAIFASQIPIVSAVGHETDVTIADFVADLRAPTPSAAAEIVSRNQQELLRQLQSGQQRLEMAMDYFLASRQRRFTQLFHRLQQQHPQLRLARQQTALERLRQRMRIAVESQLKRAEQRQKRTVQRLDHYNPQPRIHRAQSRIQQLEYRLAENMRGRLSERRERFGNAVTHLEAVSPLATLARGYSVTSVNDGTVLKQTKQVKTGDLLTTRLKDGWVESEVKQIAPVKKTRARKPSPTKPAE.

Belongs to the XseA family. In terms of assembly, heterooligomer composed of large and small subunits.

The protein resides in the cytoplasm. The enzyme catalyses Exonucleolytic cleavage in either 5'- to 3'- or 3'- to 5'-direction to yield nucleoside 5'-phosphates.. Bidirectionally degrades single-stranded DNA into large acid-insoluble oligonucleotides, which are then degraded further into small acid-soluble oligonucleotides. The protein is Exodeoxyribonuclease 7 large subunit of Klebsiella pneumoniae (strain 342).